A 476-amino-acid polypeptide reads, in one-letter code: Deoxyguanosinetriphosphate triphosphohydrolase-like protein 2 (476 aa).

Residues 1 to 20 (MYTDADRSREVVPEKDGHDK) form a disordered region. The region spanning 60–233 (RLTHSLEVAQ…MDLADDIAYS (174 aa)) is the HD domain.

It belongs to the dGTPase family. Type 2 subfamily.

This is Deoxyguanosinetriphosphate triphosphohydrolase-like protein 2 from Mesorhizobium japonicum (strain LMG 29417 / CECT 9101 / MAFF 303099) (Mesorhizobium loti (strain MAFF 303099)).